A 368-amino-acid chain; its full sequence is Ribosomal RNA large subunit methyltransferase M (368 aa).

S-adenosyl-L-methionine is bound by residues S189, 222–225, D241, D261, and D278; that span reads CPGG. K307 acts as the Proton acceptor in catalysis.

Belongs to the class I-like SAM-binding methyltransferase superfamily. RNA methyltransferase RlmE family. RlmM subfamily. Monomer.

Its subcellular location is the cytoplasm. The catalysed reaction is cytidine(2498) in 23S rRNA + S-adenosyl-L-methionine = 2'-O-methylcytidine(2498) in 23S rRNA + S-adenosyl-L-homocysteine + H(+). Catalyzes the 2'-O-methylation at nucleotide C2498 in 23S rRNA. This is Ribosomal RNA large subunit methyltransferase M from Yersinia pseudotuberculosis serotype O:1b (strain IP 31758).